We begin with the raw amino-acid sequence, 336 residues long: Ketol-acid reductoisomerase (NADP(+)) (336 aa).

The 182-residue stretch at 1 to 182 (MAVIYYDKDA…GVTRAGVIET (182 aa)) folds into the KARI N-terminal Rossmann domain. NADP(+) is bound by residues 25-28 (YGSQ), Arg48, Ser51, Ser53, and 83-86 (DENQ). His108 is an active-site residue. Position 134 (Gly134) interacts with NADP(+). Positions 183–328 (TFKEETETDL…KELRKMMPWL (146 aa)) constitute a KARI C-terminal knotted domain. Mg(2+) is bound by residues Asp191, Glu195, Glu227, and Glu231. Ser252 contributes to the substrate binding site.

It belongs to the ketol-acid reductoisomerase family. Mg(2+) serves as cofactor.

It catalyses the reaction (2R)-2,3-dihydroxy-3-methylbutanoate + NADP(+) = (2S)-2-acetolactate + NADPH + H(+). It carries out the reaction (2R,3R)-2,3-dihydroxy-3-methylpentanoate + NADP(+) = (S)-2-ethyl-2-hydroxy-3-oxobutanoate + NADPH + H(+). The protein operates within amino-acid biosynthesis; L-isoleucine biosynthesis; L-isoleucine from 2-oxobutanoate: step 2/4. Its pathway is amino-acid biosynthesis; L-valine biosynthesis; L-valine from pyruvate: step 2/4. Functionally, involved in the biosynthesis of branched-chain amino acids (BCAA). Catalyzes an alkyl-migration followed by a ketol-acid reduction of (S)-2-acetolactate (S2AL) to yield (R)-2,3-dihydroxy-isovalerate. In the isomerase reaction, S2AL is rearranged via a Mg-dependent methyl migration to produce 3-hydroxy-3-methyl-2-ketobutyrate (HMKB). In the reductase reaction, this 2-ketoacid undergoes a metal-dependent reduction by NADPH to yield (R)-2,3-dihydroxy-isovalerate. The protein is Ketol-acid reductoisomerase (NADP(+)) of Thermotoga petrophila (strain ATCC BAA-488 / DSM 13995 / JCM 10881 / RKU-1).